A 303-amino-acid chain; its full sequence is 5'-3' exonuclease (303 aa).

The 84-residue stretch at 179-262 folds into the 5'-3' exonuclease domain; the sequence is ISPAQWVDVK…LATITTEIEA (84 aa).

5'-3' exonuclease acting preferentially on double-stranded DNA. This is 5'-3' exonuclease from Halalkalibacterium halodurans (strain ATCC BAA-125 / DSM 18197 / FERM 7344 / JCM 9153 / C-125) (Bacillus halodurans).